The sequence spans 431 residues: MRSYEKSKAAFEEAQRVMPGGVNSPVRAFKSVNMDPIFMERGKGSKIYDIDGNEYIDYVLSWGPLILGHSNEKVVKEIQKAAEHGTSFGAPTELETELAELVIDRVPSIEIVRMVSSGTEATMSALRLARGYTGRNKIVKFEGCYHGHGDSLLIKAGSGVATLGLPDSPGVPESIAKNTITVPYNDLESMKLVFQEFGDDIAGVIVEPVAGNMGVVPPVKGFLEGLRELTETHGALLIFDEVMTGFRVDYNCAQGYFGVTPDLTCLGKVIGGGLPVGAYGGKAEIMEKIAPSGPIYQAGTLSGNPLAMTAGLETLKQLTPESYREFSRKADRLEKGISEAAEKNGIPCTFNRAGSMIGFFFTNGPVINYDTAKQSDLGLFAEYYKGMADEGVFLPPSQFEGLFLSTAHTDDDIEHTIKAAERVFERISRSR.

Lys268 bears the N6-(pyridoxal phosphate)lysine mark.

The protein belongs to the class-III pyridoxal-phosphate-dependent aminotransferase family. HemL subfamily. In terms of assembly, homodimer. It depends on pyridoxal 5'-phosphate as a cofactor.

Its subcellular location is the cytoplasm. The enzyme catalyses (S)-4-amino-5-oxopentanoate = 5-aminolevulinate. The protein operates within porphyrin-containing compound metabolism; protoporphyrin-IX biosynthesis; 5-aminolevulinate from L-glutamyl-tRNA(Glu): step 2/2. The sequence is that of Glutamate-1-semialdehyde 2,1-aminomutase 2 from Bacillus licheniformis (strain ATCC 14580 / DSM 13 / JCM 2505 / CCUG 7422 / NBRC 12200 / NCIMB 9375 / NCTC 10341 / NRRL NRS-1264 / Gibson 46).